The chain runs to 263 residues: MSLDERIITQAILETYFEKFKSSLDLDVAIVGGGPSGMTAARLLAADGFNVALFERKLSLGGGMWGGGMTFNMIVVQEESVHLLTDVGVPVKRYKDNYFTADAVAATTTLASAACLAGAKIFNCMSVEDVMLREENGVKRVTGIVINSSPVEIAGLHVDPVVLGSKYLVEATGHAVEVLQTLVRKNDVRLNTPSGGIEGEQSMWADTAEINTVKNTREIFPGLYVAGMAANASYGSYRMGPIFGGMLLSGEKVAADIAAKLKG.

NAD(+) contacts are provided by residues Ser-36, 55–56 (ER), Gly-63, Val-127, and 157–159 (HVD). Residues Asp-159 and His-174 each coordinate Fe cation. Position 228 (Met-228) interacts with NAD(+). Glycine is bound at residue Arg-238.

It belongs to the THI4 family. Homooctamer; tetramer of dimers. Fe(2+) is required as a cofactor.

It carries out the reaction hydrogen sulfide + glycine + NAD(+) = ADP-5-ethyl-4-methylthiazole-2-carboxylate + nicotinamide + 3 H2O + H(+). Its pathway is cofactor biosynthesis; thiamine diphosphate biosynthesis. Functionally, involved in the biosynthesis of the thiazole moiety of thiamine. Catalyzes the conversion of NAD and glycine to adenosine diphosphate 5-(2-hydroxyethyl)-4-methylthiazole-2-carboxylate (ADT), an adenylated thiazole intermediate, using free sulfide as a source of sulfur. In Solidesulfovibrio magneticus (strain ATCC 700980 / DSM 13731 / RS-1) (Desulfovibrio magneticus), this protein is Thiamine thiazole synthase.